The chain runs to 571 residues: Germacrene B synthase TPS16CC (571 aa).

Residues Arg-287, Asp-324, Asp-328, Arg-465, and Asp-468 each coordinate (2E,6E)-farnesyl diphosphate. 2 residues coordinate Mg(2+): Asp-324 and Asp-328. Positions Asp-324–Asp-328 match the DDXXD motif motif. Mg(2+) contacts are provided by Asp-468, Ser-472, and Glu-476.

Belongs to the terpene synthase family. Tpsb subfamily. It depends on Mg(2+) as a cofactor. Mn(2+) serves as cofactor. As to expression, highly expressed in glandular trichomes.

The catalysed reaction is (2E,6E)-farnesyl diphosphate = (1E,4E)-germacrene B + diphosphate. It participates in secondary metabolite biosynthesis; terpenoid biosynthesis. Functionally, involved in sesquiterpene olefins biosynthesis, constituants of cannabinoids and terpenoids-rich resins. Catalyzes mainly the conversion of (2E)-farnesyl diphosphate to germacrene B, which is spontaneously converted to gamma-elemene as a thermal degradation product. The polypeptide is Germacrene B synthase TPS16CC (Cannabis sativa (Hemp)).